Consider the following 408-residue polypeptide: D-galactonate dehydratase family member OG2516_05608 (408 aa).

D215 is a Mg(2+) binding site. A D-arabinonate-binding site is contributed by H217. The Mg(2+) site is built by E241 and E267. Positions 267, 288, 317, and 344 each coordinate D-arabinonate.

Belongs to the mandelate racemase/muconate lactonizing enzyme family. GalD subfamily.

Has no detectable activity with D-mannonate and with a panel of 70 other acid sugars (in vitro), in spite of the conservation of the residues that are expected to be important for catalytic activity and cofactor binding. May have evolved a divergent function. This is D-galactonate dehydratase family member OG2516_05608 from Oceanicola granulosus (strain ATCC BAA-861 / DSM 15982 / KCTC 12143 / HTCC2516).